The sequence spans 340 residues: Acidic endochitinase WIN6 (340 aa).

The first 22 residues, 1–22 (MSVWALFAFFSLFLSLSVRGSA), serve as a signal peptide directing secretion. Positions 23–63 (EQCGRQAGDALCPGGLCCSSYGWCGTTVDYCGIGCQSQCDG) constitute a Chitin-binding type-1 domain. 4 cysteine pairs are disulfide-bonded: Cys-25/Cys-40, Cys-34/Cys-46, Cys-39/Cys-53, and Cys-57/Cys-61. The tract at residues 64–85 (GGGGDGGDDGCDGGDDGGGDGD) is spacer. The segment at 86–340 (DGYLSDIIPK…YGLSGLKDTM (255 aa)) is chitinase. Intrachain disulfides connect Cys-110–Cys-172, Cys-183–Cys-191, and Cys-290–Cys-323. The Proton donor role is filled by Glu-154.

Belongs to the glycosyl hydrolase 19 family. Chitinase class I subfamily.

The enzyme catalyses Random endo-hydrolysis of N-acetyl-beta-D-glucosaminide (1-&gt;4)-beta-linkages in chitin and chitodextrins.. Functionally, defense against chitin-containing fungal pathogens. This chain is Acidic endochitinase WIN6 (WIN6), found in Populus trichocarpa (Western balsam poplar).